An 84-amino-acid polypeptide reads, in one-letter code: Omega-theraphotoxin-Pm1a (84 aa).

Positions 1 to 21 are cleaved as a signal peptide; it reads MKTSMLAVFVALPLAFVLTAA. The propeptide occupies 22–45; sequence TEERAHPNELVNSLVELVKLDAER. Cystine bridges form between Cys52–Cys66, Cys59–Cys71, and Cys65–Cys78.

Belongs to the neurotoxin 10 (Hwtx-1) family. 41 (Jztx-36) subfamily. Expressed by the venom gland.

The protein resides in the secreted. In terms of biological role, omega-conotoxins act at presynaptic membranes, they bind and block voltage-gated calcium channels (Cav). This toxin inhibits barium currents (IBa) mediated by L-type voltage-gated calcium channels Cav1.2/CACNA1C (IC(50)=825 nM) and Cav1.3/CACNA1C (IC(50)=2240 nM). The sequence is that of Omega-theraphotoxin-Pm1a from Pelinobius muticus (King baboon spider).